The primary structure comprises 305 residues: UDP-3-O-acyl-N-acetylglucosamine deacetylase (305 aa).

Zn(2+) contacts are provided by histidine 79, histidine 238, and aspartate 242. Histidine 265 (proton donor) is an active-site residue.

The protein belongs to the LpxC family. Zn(2+) serves as cofactor.

The catalysed reaction is a UDP-3-O-[(3R)-3-hydroxyacyl]-N-acetyl-alpha-D-glucosamine + H2O = a UDP-3-O-[(3R)-3-hydroxyacyl]-alpha-D-glucosamine + acetate. It participates in glycolipid biosynthesis; lipid IV(A) biosynthesis; lipid IV(A) from (3R)-3-hydroxytetradecanoyl-[acyl-carrier-protein] and UDP-N-acetyl-alpha-D-glucosamine: step 2/6. In terms of biological role, catalyzes the hydrolysis of UDP-3-O-myristoyl-N-acetylglucosamine to form UDP-3-O-myristoylglucosamine and acetate, the committed step in lipid A biosynthesis. In Haemophilus influenzae (strain PittGG), this protein is UDP-3-O-acyl-N-acetylglucosamine deacetylase.